We begin with the raw amino-acid sequence, 129 residues long: Large ribosomal subunit protein uL22 (129 aa).

Belongs to the universal ribosomal protein uL22 family. Part of the 50S ribosomal subunit.

Functionally, this protein binds specifically to 23S rRNA; its binding is stimulated by other ribosomal proteins, e.g. L4, L17, and L20. It is important during the early stages of 50S assembly. It makes multiple contacts with different domains of the 23S rRNA in the assembled 50S subunit and ribosome. In terms of biological role, the globular domain of the protein is located near the polypeptide exit tunnel on the outside of the subunit, while an extended beta-hairpin is found that lines the wall of the exit tunnel in the center of the 70S ribosome. The chain is Large ribosomal subunit protein uL22 from Rhizobium etli (strain ATCC 51251 / DSM 11541 / JCM 21823 / NBRC 15573 / CFN 42).